The following is a 540-amino-acid chain: MTDEGPGMCWCLRRCGRNTEDLLLPDGEEVTLGRGLGVTYQLKPTLCPLMISRTHCLFKQNTGGEWTVTDNKSLNGVWRNKERLEPHKAYTLSEGALIQLGVPPPNMESAEFEYMLVREHLEKLSGSLIRPLPDKTKATRTKRKFTSEDTDASGNEGPSNFSIPKFYRVSREDEDSAKSSHTTDLYKQPTVEPTASGTESRLNDSVEAEVVAPTQQQCRSTLQLSRVRQTMEEIRRLNVQMQEKQMEMQEKLNSPLENQVGANSVLAVQKELRALHNHLSNEQEQHMQSVKELKEIFEEEQQSMGSRKQVEEEHLKEQLAQALQEHTQLMQELNRSKNDFEQIIEAKNKELQETKEEKEKVFAQKEEVLNHMNDVLDNELQCIICSEHFIEAVTLNCAHSFCSYCIKSWKKRKEECPICRQEIVTETRSLVLDNCIDSMVDKLSPEMKNRRAALILERKEMVQAEESNPVLVVSDSSSFLSDTFYISSSSSDSDELGNDFWMRSEEEEYEETLFGCGTDELDSSDFESDDDEEEDSFLII.

Positions 30–84 (VTLGRGLGVTYQLKPTLCPLMISRTHCLFKQNTGGEWTVTDNKSLNGVWRNKERL) constitute an FHA domain. The segment at 128 to 205 (LIRPLPDKTK…SGTESRLNDS (78 aa)) is disordered. Polar residues-rich tracts occupy residues 152–162 (ASGNEGPSNFS) and 179–200 (SSHTTDLYKQPTVEPTASGTES). The RING-type zinc-finger motif lies at 382-420 (CIICSEHFIEAVTLNCAHSFCSYCIKSWKKRKEECPICR). The interval 517–540 (GTDELDSSDFESDDDEEEDSFLII) is disordered. Acidic residues predominate over residues 519–540 (DELDSSDFESDDDEEEDSFLII).

The protein belongs to the RNF8 family. Homodimer. Forms a E2-E3 ubiquitin ligase complex composed of the rnf8 homodimer and a E2 heterodimer of ube2n and ube2v2.

Its subcellular location is the nucleus. It catalyses the reaction S-ubiquitinyl-[E2 ubiquitin-conjugating enzyme]-L-cysteine + [acceptor protein]-L-lysine = [E2 ubiquitin-conjugating enzyme]-L-cysteine + N(6)-ubiquitinyl-[acceptor protein]-L-lysine.. It functions in the pathway protein modification; protein ubiquitination. Its function is as follows. E3 ubiquitin-protein ligase that plays a key role in DNA damage signaling via 2 distinct roles: by mediating the 'Lys-63'-linked ubiquitination of histones H2A and H2AX and promoting the recruitment of DNA repair proteins at double-strand breaks (DSBs) sites, and by catalyzing 'Lys-48'-linked ubiquitination to remove target proteins from DNA damage sites. Following DNA DSBs, it is recruited to the sites of damage by ATM-phosphorylated mdc1 and catalyzes the 'Lys-63'-linked ubiquitination of histones H2A and H2AX, thereby promoting the formation of tp53bp1 and brca1 ionizing radiation-induced foci (IRIF). H2A ubiquitination also mediates the ATM-dependent transcriptional silencing at regions flanking DSBs in cis, a mechanism to avoid collision between transcription and repair intermediates. Also catalyzes the formation of 'Lys-48'-linked polyubiquitin chains, leading to degradation of substrate proteins. In addition to its function in damage signaling, also plays a role in higher-order chromatin structure by mediating extensive chromatin decondensation. This Xenopus laevis (African clawed frog) protein is E3 ubiquitin-protein ligase rnf8-A.